The chain runs to 318 residues: tRNA-cytidine(32) 2-sulfurtransferase (318 aa).

The PP-loop motif signature appears at 52 to 57 (SGGKDS). 3 residues coordinate [4Fe-4S] cluster: Cys-127, Cys-130, and Cys-218.

Belongs to the TtcA family. Homodimer. Mg(2+) is required as a cofactor. Requires [4Fe-4S] cluster as cofactor.

It is found in the cytoplasm. The catalysed reaction is cytidine(32) in tRNA + S-sulfanyl-L-cysteinyl-[cysteine desulfurase] + AH2 + ATP = 2-thiocytidine(32) in tRNA + L-cysteinyl-[cysteine desulfurase] + A + AMP + diphosphate + H(+). It functions in the pathway tRNA modification. Its function is as follows. Catalyzes the ATP-dependent 2-thiolation of cytidine in position 32 of tRNA, to form 2-thiocytidine (s(2)C32). The sulfur atoms are provided by the cysteine/cysteine desulfurase (IscS) system. The protein is tRNA-cytidine(32) 2-sulfurtransferase of Actinobacillus pleuropneumoniae serotype 5b (strain L20).